A 362-amino-acid polypeptide reads, in one-letter code: 3-dehydroquinate synthase (362 aa).

NAD(+) contacts are provided by residues Asp-71–Lys-76, Gly-105–Asp-109, Thr-129–Thr-130, Lys-142, Lys-151, and Cys-169–Thr-172. Positions 184, 247, and 264 each coordinate Zn(2+).

The protein belongs to the sugar phosphate cyclases superfamily. Dehydroquinate synthase family. Co(2+) serves as cofactor. The cofactor is Zn(2+). NAD(+) is required as a cofactor.

It is found in the cytoplasm. The enzyme catalyses 7-phospho-2-dehydro-3-deoxy-D-arabino-heptonate = 3-dehydroquinate + phosphate. It participates in metabolic intermediate biosynthesis; chorismate biosynthesis; chorismate from D-erythrose 4-phosphate and phosphoenolpyruvate: step 2/7. Its function is as follows. Catalyzes the conversion of 3-deoxy-D-arabino-heptulosonate 7-phosphate (DAHP) to dehydroquinate (DHQ). The protein is 3-dehydroquinate synthase of Escherichia coli O6:K15:H31 (strain 536 / UPEC).